Consider the following 202-residue polypeptide: MKWNQKNLPIVLASRSPARIELLNRIKIIPSHIIKADIDETPNLRELPAPLAVRLAYAKAIKVVSQIEESAIIIAADTVVAVGRRILPKATTYEEVKNCIKILSGRRHRVYTGLCIIKKENDRLTVRQKIAQTIVKFKKLSDEEINFYCSLDEGIDKAGGCKISGYAEAFIAFISGSYSNVMGLPLFETVNTLTSLGFKVYH.

The active-site Proton acceptor is the aspartate 77.

The protein belongs to the Maf family. A divalent metal cation is required as a cofactor.

It is found in the cytoplasm. It catalyses the reaction a ribonucleoside 5'-triphosphate + H2O = a ribonucleoside 5'-phosphate + diphosphate + H(+). The enzyme catalyses a 2'-deoxyribonucleoside 5'-triphosphate + H2O = a 2'-deoxyribonucleoside 5'-phosphate + diphosphate + H(+). Nucleoside triphosphate pyrophosphatase. May have a dual role in cell division arrest and in preventing the incorporation of modified nucleotides into cellular nucleic acids. This chain is Nucleoside triphosphate pyrophosphatase, found in Rickettsia canadensis (strain McKiel).